Consider the following 346-residue polypeptide: MAAGDNKLQALQQALNSIEKAFGKGSIMRLGEASAKLLVEVIPTGSIALDMALGIGGVPRGRIVEVYGPESSGKTTVALHIIAEAQKMGGMAAFIDAEHALDPVYARNLGVDIDNLLVSQPDTGEQALEICEALVRSGAIDVVVIDSVAALVPKAEIDGEMGDAHVGLQARLMSQALRKLTGVVSKSKTCCLFINQIREKVGVMFGNPETTPGGRALKFYSSVRLEVRKVDTLKQGSDMIGSRTRVKVVKNKVAPPFKVADFDIMYGEGISREGSLVDLAVDMGIVEKSGAWYSYKGDRLGQGRENVKEFLRNHPALAAEIESMIRGRTESARLAAAAAPAAGDGE.

68–75 contributes to the ATP binding site; sequence GPESSGKT.

This sequence belongs to the RecA family.

The protein localises to the cytoplasm. Its function is as follows. Can catalyze the hydrolysis of ATP in the presence of single-stranded DNA, the ATP-dependent uptake of single-stranded DNA by duplex DNA, and the ATP-dependent hybridization of homologous single-stranded DNAs. It interacts with LexA causing its activation and leading to its autocatalytic cleavage. This is Protein RecA from Heliobacterium modesticaldum (strain ATCC 51547 / Ice1).